A 618-amino-acid polypeptide reads, in one-letter code: Probable Xaa-Pro aminopeptidase P (618 aa).

Residues Asp415, Asp426, Glu524, and Glu538 each contribute to the Mn(2+) site.

The protein belongs to the peptidase M24B family. Mn(2+) is required as a cofactor.

The enzyme catalyses Release of any N-terminal amino acid, including proline, that is linked to proline, even from a dipeptide or tripeptide.. Catalyzes the removal of a penultimate prolyl residue from the N-termini of peptides. This is Probable Xaa-Pro aminopeptidase P (AMPP) from Pyricularia oryzae (strain 70-15 / ATCC MYA-4617 / FGSC 8958) (Rice blast fungus).